Reading from the N-terminus, the 257-residue chain is Deoxyribose-phosphate aldolase (257 aa).

Aspartate 102 (proton donor/acceptor) is an active-site residue. Lysine 166 acts as the Schiff-base intermediate with acetaldehyde in catalysis. Lysine 198 serves as the catalytic Proton donor/acceptor.

The protein belongs to the DeoC/FbaB aldolase family. DeoC type 2 subfamily.

The protein resides in the cytoplasm. It carries out the reaction 2-deoxy-D-ribose 5-phosphate = D-glyceraldehyde 3-phosphate + acetaldehyde. It functions in the pathway carbohydrate degradation; 2-deoxy-D-ribose 1-phosphate degradation; D-glyceraldehyde 3-phosphate and acetaldehyde from 2-deoxy-alpha-D-ribose 1-phosphate: step 2/2. In terms of biological role, catalyzes a reversible aldol reaction between acetaldehyde and D-glyceraldehyde 3-phosphate to generate 2-deoxy-D-ribose 5-phosphate. The sequence is that of Deoxyribose-phosphate aldolase from Shewanella piezotolerans (strain WP3 / JCM 13877).